Consider the following 246-residue polypeptide: MyoD family inhibitor domain-containing protein (246 aa).

2 disordered regions span residues 1–93 (MSQE…EEET) and 134–164 (KIQSSLSVSSDGSKKSKESSAYSQKPSASPE). Over 1-170 (MSQEREPFSP…ASPEDGCVHC (170 aa)) the chain is Extracellular. The segment covering 63–87 (EDNSNSQPIKAQPQRLPQPNTSALE) has biased composition (polar residues). The region spanning 74–246 (QPQRLPQPNT…MECCGICFPS (173 aa)) is the MDFI domain. The chain crosses the membrane as a helical span at residues 171–188 (ILTCLFCEFLTLCNIVVG). Topologically, residues 189–246 (QASCGICTSEACCCCCTEEMGDDCNCPCDMDCGIMDACCESSDCLEICMECCGICFPS) are cytoplasmic.

The protein belongs to the MDFI family. Expressed broadly at a low level in the early embryo.

Its subcellular location is the cytoplasm. The protein localises to the cell membrane. It is found in the secreted. Functionally, required to control the activity of various transcription factors through their sequestration in the cytoplasm. Retains nuclear Zic proteins in the cytoplasm and inhibits their transcriptional activation. Required for dorsoanterior development. Necessary for siamois to activate downstream target genes, including gsc, during execution of the dorsal organizer program. Also regulates the transcriptional activity of TCF7L1/TCF3 by interacting directly with TCF7L1/TCF3 and preventing it from binding DNA. Involved in the development of lymphatic vessel valves. It is required to promote lymphatic endothelial cell migration, in a process that involves down-regulation of integrin beta 1 activation and control of cell adhesion to the extracellular matrix. This chain is MyoD family inhibitor domain-containing protein, found in Xenopus laevis (African clawed frog).